Here is a 69-residue protein sequence, read N- to C-terminus: Alpha-conotoxin Mr1.7a (69 aa).

Residues 1–21 (MGMRMMFTVFLLVVLATTVVS) form the signal peptide. The propeptide occupies 22-49 (FTSNRVLDPAFRRRNAAAKASDLIALNA). 4-hydroxyproline; in Mr1.7b is present on residues Pro-52 and Pro-58. Cystine bridges form between Cys-54/Cys-60 and Cys-55/Cys-68. Positions 56-58 (THP) are lacks the Ser-Xaa-Pro motif that is crucial for potent interaction with nAChR. Cys-68 is modified (cysteine amide).

The protein belongs to the conotoxin A superfamily. Post-translationally, two 4-hydroxyprolines have been detected by MS but the assignment of which of the three prolines is modified is uncertain. In terms of tissue distribution, expressed by the venom duct.

The protein localises to the secreted. Its function is as follows. Acts as a co-agonist with PNU (an alpha-7 nAChR-selective allosteric modulator) at the endogenous alpha-7/CHRNA7 nicotinic acetylcholine receptors (nAChR) when tested in human SH-SY5Y neuroblastoma cells. Is the third alpha-conotoxin that acts as an agonist (after alpha-conotoxin SrIA/SrIB). Also acts as an antagonist at human alpha-7 nAChRs heterologously expressed in Xenopus oocytes. Has possibly a distinct nAChR binding mode from other alpha-conotoxins, due to a different three residue motif (lacks the Ser-Xaa-Pro motif). Acts as a weak partial agonist at alpha-7/CHRNA7 nicotinic acetylcholine receptors (nAChR) when tested in human SH-SY5Y neuroblastoma cells. Has possibly a distinct nAChR binding mode from other alpha-conotoxins, due to a different three residue motif (lacks the Ser-Xaa-Pro motif). This is Alpha-conotoxin Mr1.7a from Conus marmoreus (Marble cone).